We begin with the raw amino-acid sequence, 160 residues long: Protein Vago (160 aa).

The first 23 residues, 1 to 23, serve as a signal peptide directing secretion; that stretch reads MESISSMIYLVAMMSLIIGGSQA.

Expressed in fat body.

It localises to the secreted. Functionally, probably involved in the antiviral immune response. May have a role in controlling viral load in the adult fat body, after infection with viruses such as the Drosophila C virus. This is Protein Vago from Drosophila melanogaster (Fruit fly).